A 366-amino-acid chain; its full sequence is RNA 3'-terminal phosphate cyclase (366 aa).

Positions 104, 131, 294, 297, 298, and 320 each coordinate ATP. The active-site Tele-AMP-histidine intermediate is His-320.

It belongs to the RNA 3'-terminal cyclase family. Type 1 subfamily. Detected in retinal ganglion cells (RGCs) (at protein level).

It is found in the nucleus. The protein localises to the nucleoplasm. The catalysed reaction is a 3'-end 3'-phospho-ribonucleotide-RNA + ATP = a 3'-end 2',3'-cyclophospho-ribonucleotide-RNA + AMP + diphosphate. Catalyzes the conversion of 3'-phosphate to a 2',3'-cyclic phosphodiester at the end of RNA. The mechanism of action of the enzyme occurs in 3 steps: (A) adenylation of the enzyme by ATP; (B) transfer of adenylate to an RNA-N3'P to produce RNA-N3'PP5'A; (C) and attack of the adjacent 2'-hydroxyl on the 3'-phosphorus in the diester linkage to produce the cyclic end product. Likely functions in some aspects of cellular RNA processing. Function plays an important role in regulating axon regeneration by inhibiting central nervous system (CNS) axon regeneration following optic nerve injury. The sequence is that of RNA 3'-terminal phosphate cyclase from Mus musculus (Mouse).